Reading from the N-terminus, the 206-residue chain is Methyl-coenzyme M reductase operon protein C (206 aa).

As to quaternary structure, MCR is composed of three subunits: alpha, beta, and gamma. The function of proteins C and D is not known.

This is Methyl-coenzyme M reductase operon protein C (mcrC) from Methanosarcina barkeri (strain Fusaro / DSM 804).